The chain runs to 243 residues: Pyridoxine 5'-phosphate synthase (243 aa).

Residue Asn9 participates in 3-amino-2-oxopropyl phosphate binding. Asp11–His12 contributes to the 1-deoxy-D-xylulose 5-phosphate binding site. Arg20 provides a ligand contact to 3-amino-2-oxopropyl phosphate. The Proton acceptor role is filled by His45. Residues Arg47 and His52 each contribute to the 1-deoxy-D-xylulose 5-phosphate site. The active-site Proton acceptor is Glu72. Thr102 is a 1-deoxy-D-xylulose 5-phosphate binding site. The active-site Proton donor is the His193. Residues Gly194 and Gly215–His216 each bind 3-amino-2-oxopropyl phosphate.

The protein belongs to the PNP synthase family. Homooctamer; tetramer of dimers.

It localises to the cytoplasm. It carries out the reaction 3-amino-2-oxopropyl phosphate + 1-deoxy-D-xylulose 5-phosphate = pyridoxine 5'-phosphate + phosphate + 2 H2O + H(+). It participates in cofactor biosynthesis; pyridoxine 5'-phosphate biosynthesis; pyridoxine 5'-phosphate from D-erythrose 4-phosphate: step 5/5. Its function is as follows. Catalyzes the complicated ring closure reaction between the two acyclic compounds 1-deoxy-D-xylulose-5-phosphate (DXP) and 3-amino-2-oxopropyl phosphate (1-amino-acetone-3-phosphate or AAP) to form pyridoxine 5'-phosphate (PNP) and inorganic phosphate. This is Pyridoxine 5'-phosphate synthase from Salmonella typhi.